We begin with the raw amino-acid sequence, 411 residues long: MTYPDPTLFGHDPWWLVLAKSLGIFAFLLLTVLAAILIERKVLGRMQLRFGPNRVGPHGLLQSLADGVKLALKEGLVPAGVDKWIYLAAPIISVIPAFMAFAVIPMGGEVSVFGHRTALQLTDLPVAVLYILAVTSIGVYGIVLAGWASGSVYPLLGGLRSSAQVISYEIAMALSFAAVFIYAGTMSTSGIVAAQNDTWYIVLLLPSFLVYVTAMVGETNRAPFDLPEAEGELVGGFHTEYSSLKFAMFMLAEYVNMTTVSALATTLFLGGWHAPWPISIADGANSGWWPLLWFTVKVWLFLFFFMWLRATLPRMRYDQFMALGWKILIPVSLGWIMIVAITHSLRDQGYQAPATAAIGLAVAAVILLALLGRSRLRARRIRPEPIRPAGDGAFPVPPLPVKTRALEDADA.

Transmembrane regions (helical) follow at residues 18–38 (LAKS…AILI), 84–104 (WIYL…FAVI), 124–144 (LPVA…GIVL), 165–185 (VISY…YAGT), 198–218 (TWYI…MVGE), 260–280 (VSAL…PISI), 288–308 (WWPL…FMWL), 321–341 (MALG…IVAI), and 352–372 (APAT…ALLG).

This sequence belongs to the complex I subunit 1 family. As to quaternary structure, NDH-1 is composed of 14 different subunits. Subunits NuoA, H, J, K, L, M, N constitute the membrane sector of the complex.

It is found in the cell membrane. The catalysed reaction is a quinone + NADH + 5 H(+)(in) = a quinol + NAD(+) + 4 H(+)(out). Functionally, NDH-1 shuttles electrons from NADH, via FMN and iron-sulfur (Fe-S) centers, to quinones in the respiratory chain. The immediate electron acceptor for the enzyme in this species is believed to be menaquinone. Couples the redox reaction to proton translocation (for every two electrons transferred, four hydrogen ions are translocated across the cytoplasmic membrane), and thus conserves the redox energy in a proton gradient. This subunit may bind ubiquinone. The protein is NADH-quinone oxidoreductase subunit H of Mycolicibacterium vanbaalenii (strain DSM 7251 / JCM 13017 / BCRC 16820 / KCTC 9966 / NRRL B-24157 / PYR-1) (Mycobacterium vanbaalenii).